The following is a 754-amino-acid chain: Photosystem I P700 chlorophyll a apoprotein A1 (754 aa).

The next 8 helical transmembrane spans lie at 72 to 95 (IFSA…FHGA), 158 to 181 (LYCT…FHYH), 197 to 221 (MNHH…HVSL), 293 to 311 (TAHH…GHMY), 351 to 374 (WHAQ…HHMY), 390 to 416 (LSLF…IFMV), 438 to 460 (AIIS…LYIH), and 535 to 553 (FMVH…LILL). Positions 577 and 586 each coordinate [4Fe-4S] cluster. Transmembrane regions (helical) follow at residues 593–614 (HVFL…HFSW) and 668–690 (LSAY…MFLF). Position 679 (His679) interacts with chlorophyll a'. Residues Met687 and Tyr695 each contribute to the chlorophyll a site. Trp696 serves as a coordination point for phylloquinone. The chain crosses the membrane as a helical span at residues 728–748 (AVGVAHYLLGGIVTTWAFFLA).

This sequence belongs to the PsaA/PsaB family. In terms of assembly, the PsaA/B heterodimer binds the P700 chlorophyll special pair and subsequent electron acceptors. PSI consists of a core antenna complex that captures photons, and an electron transfer chain that converts photonic excitation into a charge separation. The cyanobacterial PSI reaction center is composed of one copy each of PsaA,B,C,D,E,F,I,J,K,L,M and X, and forms trimeric complexes. PSI electron transfer chain: 5 chlorophyll a, 1 chlorophyll a', 2 phylloquinones and 3 4Fe-4S clusters. PSI core antenna: 90 chlorophyll a, 22 carotenoids, 3 phospholipids and 1 galactolipid. P700 is a chlorophyll a/chlorophyll a' dimer, A0 is one or more chlorophyll a, A1 is one or both phylloquinones and FX is a shared 4Fe-4S iron-sulfur center. serves as cofactor.

It is found in the cellular thylakoid membrane. It carries out the reaction reduced [plastocyanin] + hnu + oxidized [2Fe-2S]-[ferredoxin] = oxidized [plastocyanin] + reduced [2Fe-2S]-[ferredoxin]. PsaA and PsaB bind P700, the primary electron donor of photosystem I (PSI), as well as the electron acceptors A0, A1 and FX. PSI is a plastocyanin/cytochrome c6-ferredoxin oxidoreductase, converting photonic excitation into a charge separation, which transfers an electron from the donor P700 chlorophyll pair to the spectroscopically characterized acceptors A0, A1, FX, FA and FB in turn. Oxidized P700 is reduced on the lumenal side of the thylakoid membrane by plastocyanin or cytochrome c6. In Rippkaea orientalis (strain PCC 8801 / RF-1) (Cyanothece sp. (strain PCC 8801)), this protein is Photosystem I P700 chlorophyll a apoprotein A1.